Here is a 255-residue protein sequence, read N- to C-terminus: EEF1A lysine methyltransferase 4 (255 aa).

Positions 26 and 30 each coordinate S-adenosyl-L-methionine. At tyrosine 39 the chain carries Phosphotyrosine. Residues tryptophan 41, glycine 66, 88-89, 113-114, and lysine 130 each bind S-adenosyl-L-methionine; these read DY and DV. Residues 129-134 carry the Required for methyltransferase activity motif; the sequence is EKGTLD.

Belongs to the methyltransferase superfamily.

The enzyme catalyses L-lysyl-[protein] + S-adenosyl-L-methionine = N(6)-methyl-L-lysyl-[protein] + S-adenosyl-L-homocysteine + H(+). It catalyses the reaction N(6)-methyl-L-lysyl-[protein] + S-adenosyl-L-methionine = N(6),N(6)-dimethyl-L-lysyl-[protein] + S-adenosyl-L-homocysteine + H(+). The catalysed reaction is N(6),N(6)-dimethyl-L-lysyl-[protein] + S-adenosyl-L-methionine = N(6),N(6),N(6)-trimethyl-L-lysyl-[protein] + S-adenosyl-L-homocysteine + H(+). Protein-lysine methyltransferase that efficiently catalyzes three successive methylations on 'Lys-36' in eukaryotic translation elongation factor 1 alpha (EEF1A1 or EEF1A2). The sequence is that of EEF1A lysine methyltransferase 4 from Homo sapiens (Human).